The sequence spans 506 residues: ATP synthase subunit alpha, chloroplastic (506 aa).

170-177 (GDRQTGKT) provides a ligand contact to ATP.

It belongs to the ATPase alpha/beta chains family. In terms of assembly, F-type ATPases have 2 components, CF(1) - the catalytic core - and CF(0) - the membrane proton channel. CF(1) has five subunits: alpha(3), beta(3), gamma(1), delta(1), epsilon(1). CF(0) has four main subunits: a, b, b' and c.

Its subcellular location is the plastid. It localises to the chloroplast thylakoid membrane. The catalysed reaction is ATP + H2O + 4 H(+)(in) = ADP + phosphate + 5 H(+)(out). Its function is as follows. Produces ATP from ADP in the presence of a proton gradient across the membrane. The alpha chain is a regulatory subunit. This chain is ATP synthase subunit alpha, chloroplastic, found in Chlorella vulgaris (Green alga).